Here is a 529-residue protein sequence, read N- to C-terminus: GMP synthase [glutamine-hydrolyzing] (529 aa).

In terms of domain architecture, Glutamine amidotransferase type-1 spans 3 to 204; the sequence is TVAIVDFGSQ…FLKIAGCTRD (202 aa). The active-site Nucleophile is the C87. Active-site residues include H179 and E181. One can recognise a GMPS ATP-PPase domain in the interval 205-395; sequence WTMGSFLHTQ…LGLPSAILDR (191 aa). 232–238 contacts ATP; sequence SGGVDSS.

As to quaternary structure, homodimer.

It catalyses the reaction XMP + L-glutamine + ATP + H2O = GMP + L-glutamate + AMP + diphosphate + 2 H(+). The protein operates within purine metabolism; GMP biosynthesis; GMP from XMP (L-Gln route): step 1/1. Its function is as follows. Catalyzes the synthesis of GMP from XMP. This is GMP synthase [glutamine-hydrolyzing] from Anaplasma marginale (strain St. Maries).